The primary structure comprises 101 residues: Small ribosomal subunit protein uS14 (101 aa).

Belongs to the universal ribosomal protein uS14 family. Part of the 30S ribosomal subunit. Contacts proteins S3 and S10.

Binds 16S rRNA, required for the assembly of 30S particles and may also be responsible for determining the conformation of the 16S rRNA at the A site. The chain is Small ribosomal subunit protein uS14 from Marinobacter nauticus (strain ATCC 700491 / DSM 11845 / VT8) (Marinobacter aquaeolei).